The following is a 375-amino-acid chain: Tyrosine--tRNA ligase (375 aa).

Residues Y37, Y168, Q172, D175, and Q190 each coordinate L-tyrosine. The short motif at 251–255 (KMSKS) is the 'KMSKS' region element. Position 254 (K254) interacts with ATP.

Belongs to the class-I aminoacyl-tRNA synthetase family. TyrS type 4 subfamily. In terms of assembly, homodimer.

The protein resides in the cytoplasm. The enzyme catalyses tRNA(Tyr) + L-tyrosine + ATP = L-tyrosyl-tRNA(Tyr) + AMP + diphosphate + H(+). In terms of biological role, catalyzes the attachment of tyrosine to tRNA(Tyr) in a two-step reaction: tyrosine is first activated by ATP to form Tyr-AMP and then transferred to the acceptor end of tRNA(Tyr). This chain is Tyrosine--tRNA ligase, found in Thermococcus sibiricus (strain DSM 12597 / MM 739).